Here is a 401-residue protein sequence, read N- to C-terminus: Alternative oxidase, mitochondrial (401 aa).

The disordered stretch occupies residues 53 to 81 (KRASLSLQPSVREAEKSQGPVVGSEGRGV). A helical membrane pass occupies residues 184–204 (LFRIILLESIAGVPGMVGGTL). Fe cation is bound by residues Glu191, Glu230, and His233. Residues 249-269 (ALVLAAQGVFYNAFFLTYLIS) form a helical membrane-spanning segment. Fe cation-binding residues include Glu281, Glu282, Glu335, and His338.

Belongs to the alternative oxidase family. It depends on Fe cation as a cofactor.

It localises to the mitochondrion inner membrane. Catalyzes cyanide-resistant oxygen consumption. May increase respiration when the cytochrome respiratory pathway is restricted, or in response to low temperatures. This Cryptococcus neoformans var. grubii serotype A (strain H99 / ATCC 208821 / CBS 10515 / FGSC 9487) (Filobasidiella neoformans var. grubii) protein is Alternative oxidase, mitochondrial (AOX1).